A 151-amino-acid chain; its full sequence is Probable ubiquitin-conjugating enzyme E2 W-B (151 aa).

Residues 3–151 enclose the UBC core domain; that stretch reads SMQKRLQKEL…TKWWYHDDTC (149 aa). Cysteine 91 acts as the Glycyl thioester intermediate in catalysis.

Belongs to the ubiquitin-conjugating enzyme family.

It localises to the nucleus. The enzyme catalyses S-ubiquitinyl-[E1 ubiquitin-activating enzyme]-L-cysteine + [E2 ubiquitin-conjugating enzyme]-L-cysteine = [E1 ubiquitin-activating enzyme]-L-cysteine + S-ubiquitinyl-[E2 ubiquitin-conjugating enzyme]-L-cysteine.. The catalysed reaction is S-ubiquitinyl-[E1 ubiquitin-activating enzyme]-L-cysteine + [acceptor protein]-N-terminal-amino acid = [E1 ubiquitin-activating enzyme]-L-cysteine + N-terminal-ubiquitinyl-[acceptor protein].. It functions in the pathway protein modification; protein ubiquitination. Functionally, accepts ubiquitin from the E1 complex and catalyzes its covalent attachment to other proteins. Catalyzes monoubiquitination. Involved in degradation of misfolded chaperone substrate and DNA repair. In Danio rerio (Zebrafish), this protein is Probable ubiquitin-conjugating enzyme E2 W-B (ube2wb).